The primary structure comprises 188 residues: Ribosome-recycling factor (188 aa).

This sequence belongs to the RRF family.

Its subcellular location is the cytoplasm. Responsible for the release of ribosomes from messenger RNA at the termination of protein biosynthesis. May increase the efficiency of translation by recycling ribosomes from one round of translation to another. The chain is Ribosome-recycling factor from Anaeromyxobacter sp. (strain K).